A 444-amino-acid chain; its full sequence is MARAGQAVDPSPLGQPLEFHFARRSAPNRFLKAGMSERMCSWTEENPSARGIPSRELIETYRTWGRGNIGAIVTGNVMIDPNHIEAEGNPTIPPNALFSGERFDQFANLAAAARANGSLILAQISHPGRQTPSHRQPEPISASDVPLDTENMGNTFAVPRAATENEIKNIITGFAHAAEFLDRAGYDGVELHAAHGYLLNQFLSRATNLRTDKYGGTLTNRMRLILEIRAAITEKVRPGFIVGIKINSVEFQPNGIVPDEACELCCALEEHRFDFVELSGGKYKNLEEDDNAKHIISKRHEAFFLDVAQKVVSSLTKMKSYLTGGFRSTAGMVDGLQTVDGIGLARPFCQEPYLCHDILRGKIPGAIIPVMDQLNYQLTVAAACIQMRQIGNKVQPVDLSSQDAVDAITAAAEGWLKRKAIDRSEEAFKPPLLSGDAAPLSVEA.

FMN contacts are provided by residues 37 to 40 (ERMC) and Q123. The tract at residues 127–149 (PGRQTPSHRQPEPISASDVPLDT) is disordered. 192–195 (HAAH) contacts substrate. An FMN-binding site is contributed by 345–346 (AR).

It belongs to the NADH:flavin oxidoreductase/NADH oxidase family.

The protein localises to the cytoplasm. It is found in the cytosol. Its function is as follows. NADH-dependent flavin oxidoreductase; part of the gene cluster that mediates the biosynthesis of aflatoxins, a group of polyketide-derived furanocoumarins, and part of the most toxic and carcinogenic compounds among the known mycotoxins. The four major aflatoxins produced by A.parasiticus are aflatoxin B1 (AFB1), aflatoxin B2 (AFB2), aflatoxin G1 (AFG1) and aflatoxin G2 (AFG2). Within the aflatoxin pathway, the NADH-dependent flavin oxidoreductase nadA is specifically required for the last steps in which OMST is converted specifically to aflatoxin G1. The biosynthesis of aflatoxins begins with the norsolorinic acid synthase aflC that combines a hexanoyl starter unit produced by the fatty acid synthase aflA/aflB and 7 malonyl-CoA extender units to synthesize the precursor NOR. The second step is the conversion of NOR to averantin and requires the norsolorinic acid ketoreductase aflD, which catalyzes the dehydration of norsolorinic acid to form (1'S)-averantin. The norsolorinic acid reductases aflE and aflF may also play a role in the conversion of NOR to AVN. The cytochrome P450 monooxygenase aflG then catalyzes the hydroxylation of AVN to 5'hydroxyaverantin (HAVN). The next step is performed by the 5'-hydroxyaverantin dehydrogenase aflH that transforms HAVN to 5'-oxoaverantin (OAVN) which is further converted to averufin (AVF) by aflK that plays a dual role in the pathway, as a 5'-oxoaverantin cyclase that mediates conversion of 5'-oxoaverantin, as well as a versicolorin B synthase in a later step in the pathway. The averufin oxidase aflI catalyzes the conversion of AVF to versiconal hemiacetal acetate (VHA). VHA is then the substrate for the versiconal hemiacetal acetate esterase aflJ to yield versiconal (VAL). Versicolorin B synthase aflK then converts VAL to versicolorin B (VERB) by closing the bisfuran ring of aflatoxin which is required for DNA-binding, thus giving to aflatoxin its activity as a mutagen. Then, the activity of the versicolorin B desaturase aflL leads to versicolorin A (VERA). A branch point starts from VERB since it can also be converted to dihydrodemethylsterigmatocystin (DMDHST), probably also by aflL, VERA being a precursor for aflatoxins B1 and G1, and DMDHST for aflatoxins B2 and G2. Next, the versicolorin reductase aflM and the cytochrome P450 monooxygenase aflN are involved in conversion of VERA to demethylsterigmatocystin (DMST). AflX and aflY seem also involved in this step, through probable aflX-mediated epoxide ring-opening step following versicolorin A oxidation and aflY-mediated Baeyer-Villiger oxidation required for the formation of the xanthone ring. The methyltransferase aflO then leads to the modification of DMST to sterigmatocystin (ST), and of DMDHST to dihydrosterigmatocystin (DHST). Both ST and DHST are then substrates of the O-methyltransferase aflP to yield O-methylsterigmatocystin (OMST) and dihydro-O-methylsterigmatocystin (DHOMST), respectively. Finally OMST is converted to aflatoxins B1 and G1, and DHOMST to aflatoxins B2 and G2, via the action of several enzymes including O-methylsterigmatocystin oxidoreductase aflQ, the cytochrome P450 monooxygenase aflU, but also the NADH-dependent flavin oxidoreductase nadA which is specifically required for the synthesis of AFG1. The sequence is that of NADH-dependent flavin oxidoreductase nadA from Aspergillus parasiticus (strain ATCC 56775 / NRRL 5862 / SRRC 143 / SU-1).